The primary structure comprises 231 residues: Small ribosomal subunit protein uS3 (231 aa).

The 70-residue stretch at 39 to 108 (IKNYIKKRYK…EISISVLEVK (70 aa)) folds into the KH type-2 domain.

It belongs to the universal ribosomal protein uS3 family. As to quaternary structure, part of the 30S ribosomal subunit. Forms a tight complex with proteins S10 and S14.

Its function is as follows. Binds the lower part of the 30S subunit head. Binds mRNA in the 70S ribosome, positioning it for translation. The sequence is that of Small ribosomal subunit protein uS3 from Aquifex pyrophilus.